A 550-amino-acid chain; its full sequence is Beta-fructofuranosidase, insoluble isoenzyme CWINV6 (550 aa).

Substrate is bound by residues Trp-28 to Asp-31, Gln-47, Trp-92 to Ser-93, Arg-157 to Asp-158, and Glu-214. Residue Asp-31 is part of the active site. N-linked (GlcNAc...) asparagine glycans are attached at residues Asn-235 and Asn-272.

The protein belongs to the glycosyl hydrolase 32 family. As to expression, expressed in seedlings and leaves, and, to a lower extent, in flowers and seeds.

The protein resides in the secreted. Its subcellular location is the extracellular space. It localises to the apoplast. It is found in the cell wall. The enzyme catalyses Hydrolysis of terminal, non-reducing (2-&gt;1)- and (2-&gt;6)-linked beta-D-fructofuranose residues in fructans.. Functionally, 6 and 1-fructan exohydrolase that can degrade both inulin and levan-type fructans, such as phlein, levan, neokestose, levanbiose, 6-kestose, 1-kestose, inulin, and 1,1-nystose. This chain is Beta-fructofuranosidase, insoluble isoenzyme CWINV6 (CWINV6), found in Arabidopsis thaliana (Mouse-ear cress).